The sequence spans 284 residues: D-tagatose-1,6-bisphosphate aldolase subunit GatY (284 aa).

D82 functions as the Proton donor in the catalytic mechanism. Zn(2+) is bound by residues H83 and H180. G181 is a binding site for dihydroxyacetone phosphate. H208 is a Zn(2+) binding site. Residues 209-211 (GAS) and 230-233 (NVAT) each bind dihydroxyacetone phosphate.

Belongs to the class II fructose-bisphosphate aldolase family. TagBP aldolase GatY subfamily. In terms of assembly, forms a complex with GatZ. Zn(2+) is required as a cofactor.

It catalyses the reaction D-tagatofuranose 1,6-bisphosphate = D-glyceraldehyde 3-phosphate + dihydroxyacetone phosphate. The protein operates within carbohydrate metabolism; D-tagatose 6-phosphate degradation; D-glyceraldehyde 3-phosphate and glycerone phosphate from D-tagatose 6-phosphate: step 2/2. In terms of biological role, catalytic subunit of the tagatose-1,6-bisphosphate aldolase GatYZ, which catalyzes the reversible aldol condensation of dihydroxyacetone phosphate (DHAP or glycerone-phosphate) with glyceraldehyde 3-phosphate (G3P) to produce tagatose 1,6-bisphosphate (TBP). Requires GatZ subunit for full activity and stability. Is involved in the catabolism of galactitol. The polypeptide is D-tagatose-1,6-bisphosphate aldolase subunit GatY (Salmonella choleraesuis (strain SC-B67)).